A 159-amino-acid polypeptide reads, in one-letter code: Insulin-like peptide 7 (159 aa).

Positions 1–31 are cleaved as a signal peptide; the sequence is MTRMIIQNSGSWTLCGAVLLFVLPLIPTPEA. Intrachain disulfides connect Cys63–Cys136, Cys75–Cys150, and Cys135–Cys141. A propeptide spans 90–121 (connecting peptide); that stretch reads TGNDEAWIKKTTTEPDGSTWLHVNYANMFLRS.

Belongs to the insulin family. In terms of assembly, heterodimer of a B chain and an A chain linked by two disulfide bonds. In terms of tissue distribution, broadly expressed at a low level throughout the embryo, except the yolk. Expressed at a moderate level in the embryonic midgut. Larval expression is restricted to ten cells of the ventral nerve cord - in four pairs of centrally located cells in the most posterior abdominal segments and in one pair of dorsally located cells in the A1 or A2 segments.

It localises to the secreted. Its function is as follows. Possible ligand of InR/insulin-like receptor. In Drosophila melanogaster (Fruit fly), this protein is Insulin-like peptide 7.